Reading from the N-terminus, the 748-residue chain is Choline O-acetyltransferase (748 aa).

Over residues methionine 1–glycine 10 the composition is skewed to basic residues. Residues methionine 1–alanine 89 are disordered. Residues tryptophan 17–arginine 32 are compositionally biased toward basic and acidic residues. A compositionally biased stretch (gly residues) spans glycine 40 to glycine 53. Composition is skewed to low complexity over residues asparagine 54–threonine 65 and histidine 73–alanine 89. Phosphoserine is present on serine 125. The Proton acceptor role is filled by histidine 442. Position 473 is a phosphoserine (serine 473). Residues glycine 520–aspartate 532, serine 558, and glutamine 659 contribute to the CoA site. Positions proline 727 to proline 748 are disordered.

It belongs to the carnitine/choline acetyltransferase family.

The enzyme catalyses choline + acetyl-CoA = acetylcholine + CoA. Its function is as follows. Catalyzes the reversible synthesis of acetylcholine (ACh) from acetyl CoA and choline at cholinergic synapses. This Homo sapiens (Human) protein is Choline O-acetyltransferase (CHAT).